Here is a 1229-residue protein sequence, read N- to C-terminus: Membrane-anchored lipid-binding protein SIP3 (1229 aa).

Residues 1–1066 (MSVHGRDPKK…AEKFSRINRM (1066 aa)) are Cytoplasmic-facing. Positions 309–423 (SPEKSGWLYM…WLIAFEATKK (115 aa)) constitute a PH domain. One can recognise a VASt domain in the interval 771-976 (EYSITYNHEY…VLRYYLEKIG (206 aa)). The chain crosses the membrane as a helical span at residues 1067–1087 (MVVGLLASIMINILLSEKASV). At 1088–1229 (PYWSIKRAEK…ELEKLRPPIT (142 aa)) the chain is on the lumenal side. A glycan (N-linked (GlcNAc...) asparagine) is linked at Asn1206.

Belongs to the SIP3 family. Interacts with SNF1.

The protein resides in the endoplasmic reticulum membrane. Its function is as follows. May be involved in sterol transfer between intracellular membranes. In Saccharomyces cerevisiae (strain ATCC 204508 / S288c) (Baker's yeast), this protein is Membrane-anchored lipid-binding protein SIP3.